The chain runs to 260 residues: 3-dehydroquinate dehydratase (260 aa).

3-dehydroquinate contacts are provided by residues 50-52 (EWR) and Arg-86. His-148 (proton donor/acceptor) is an active-site residue. The Schiff-base intermediate with substrate role is filled by Lys-175. Positions 217, 236, and 240 each coordinate 3-dehydroquinate.

This sequence belongs to the type-I 3-dehydroquinase family. In terms of assembly, homodimer.

The enzyme catalyses 3-dehydroquinate = 3-dehydroshikimate + H2O. It functions in the pathway metabolic intermediate biosynthesis; chorismate biosynthesis; chorismate from D-erythrose 4-phosphate and phosphoenolpyruvate: step 3/7. In terms of biological role, involved in the third step of the chorismate pathway, which leads to the biosynthesis of aromatic amino acids. Catalyzes the cis-dehydration of 3-dehydroquinate (DHQ) and introduces the first double bond of the aromatic ring to yield 3-dehydroshikimate. The sequence is that of 3-dehydroquinate dehydratase from Aromatoleum aromaticum (strain DSM 19018 / LMG 30748 / EbN1) (Azoarcus sp. (strain EbN1)).